Consider the following 481-residue polypeptide: Aspartyl/glutamyl-tRNA(Asn/Gln) amidotransferase subunit B (481 aa).

This sequence belongs to the GatB/GatE family. GatB subfamily. In terms of assembly, heterotrimer of A, B and C subunits.

The catalysed reaction is L-glutamyl-tRNA(Gln) + L-glutamine + ATP + H2O = L-glutaminyl-tRNA(Gln) + L-glutamate + ADP + phosphate + H(+). It carries out the reaction L-aspartyl-tRNA(Asn) + L-glutamine + ATP + H2O = L-asparaginyl-tRNA(Asn) + L-glutamate + ADP + phosphate + 2 H(+). In terms of biological role, allows the formation of correctly charged Asn-tRNA(Asn) or Gln-tRNA(Gln) through the transamidation of misacylated Asp-tRNA(Asn) or Glu-tRNA(Gln) in organisms which lack either or both of asparaginyl-tRNA or glutaminyl-tRNA synthetases. The reaction takes place in the presence of glutamine and ATP through an activated phospho-Asp-tRNA(Asn) or phospho-Glu-tRNA(Gln). This Teredinibacter turnerae (strain ATCC 39867 / T7901) protein is Aspartyl/glutamyl-tRNA(Asn/Gln) amidotransferase subunit B.